The following is a 342-amino-acid chain: N-acetyl-gamma-glutamyl-phosphate reductase (342 aa).

The active site involves Cys-146.

The protein belongs to the NAGSA dehydrogenase family. Type 1 subfamily.

It localises to the cytoplasm. The enzyme catalyses N-acetyl-L-glutamate 5-semialdehyde + phosphate + NADP(+) = N-acetyl-L-glutamyl 5-phosphate + NADPH + H(+). The protein operates within amino-acid biosynthesis; L-arginine biosynthesis; N(2)-acetyl-L-ornithine from L-glutamate: step 3/4. Functionally, catalyzes the NADPH-dependent reduction of N-acetyl-5-glutamyl phosphate to yield N-acetyl-L-glutamate 5-semialdehyde. This chain is N-acetyl-gamma-glutamyl-phosphate reductase, found in Frankia casuarinae (strain DSM 45818 / CECT 9043 / HFP020203 / CcI3).